Here is a 1226-residue protein sequence, read N- to C-terminus: Integrin alpha pat-2 (1226 aa).

Residues 1 to 25 form the signal peptide; sequence MREGSFPRRIGLLLGLLGLLAGVAT. Topologically, residues 26–1154 are extracellular; the sequence is FNIDTKNVVV…IASEEGRDLP (1129 aa). FG-GAP repeat units follow at residues 27-94, 108-171, 178-233, 234-290, 291-345, 362-421, and 425-488; these read NIDT…TCRE, NGSH…NAEE, EPAR…TDRP, NTEY…MMIN, LTDE…KPQY, GKQI…GVRE, and QKIE…PESA. N-linked (GlcNAc...) asparagine glycosylation is found at Asn-108, Asn-228, and Asn-290. Asn-608 carries an N-linked (GlcNAc...) asparagine glycan. The short motif at 620–622 is the Cell attachment site element; it reads RGD. Asn-679 carries an N-linked (GlcNAc...) asparagine glycan. Residues 709–733 form a disordered region; the sequence is SVGGDGSKSAPACSPTSDEPDSDGK. 2 N-linked (GlcNAc...) asparagine glycosylation sites follow: Asn-775 and Asn-819. Disordered stretches follow at residues 898–958 and 982–1040; these read LRIT…HVYE and DYEY…ARFS. The segment covering 920-931 has biased composition (acidic residues); the sequence is REEDDESYEDET. Residues 932 to 951 are compositionally biased toward low complexity; that stretch reads TTQSQSTRHQSTQHQTHHQS. The segment covering 985–1005 has biased composition (acidic residues); that stretch reads YIPDDQEYDGDDFEEEDDEDF. The span at 1010–1026 shows a compositional bias: basic residues; sequence SKRVKRNPTPKKKKKGG. A compositionally biased stretch (basic and acidic residues) spans 1027–1040; that stretch reads EHRGEPRSDKARFS. The chain crosses the membrane as a helical span at residues 1155–1177; sequence WWLYLLAILIGLAILILLILLLW. The Cytoplasmic segment spans residues 1178 to 1226; the sequence is RCGFFKRNRPPTEHAELRADRQPNAQYADSQSRYTSQDQYNQGRHGQML. Positions 1191 to 1226 are disordered; sequence HAELRADRQPNAQYADSQSRYTSQDQYNQGRHGQML. The segment covering 1200–1226 has biased composition (polar residues); sequence PNAQYADSQSRYTSQDQYNQGRHGQML.

Belongs to the integrin alpha chain family. Heterodimer of an alpha and a beta subunit. Interacts with beta subunit pat-3. Interacts with dep-1. Component of an integrin containing attachment complex, composed of at least pat-2, pat-3, pat-4, pat-6, unc-52, unc-97 and unc-112. Expressed in body-wall muscle cells, distal tip cells, and vulval tissue.

It localises to the membrane. Required for muscle development probably through the regulation of the actin-myosin cytoskeleton. Component of an integrin containing attachment complex, which is required for muscle maintenance. During the formation of neuromuscular junctions at the larval stage, negatively regulates membrane protrusion from body wall muscles, probably through lamins such as epi-1, lam-2 and unc-52. Required for distal tip cell migration and dorsal pathfinding. Required for egg-laying. May play a role in cell motility and cell-cell interactions. Plays a role in vulval development. Probably within the alpha pat-2/beta pat-3 integrin receptor complex, plays a role in the negative regulation of let-23 signaling and vulval induction. This is probably partly by restricting the mobility of the let-23 receptor on the plasma membrane of vulval cells which thereby attenuates let-23 signaling. The chain is Integrin alpha pat-2 from Caenorhabditis elegans.